Here is a 259-residue protein sequence, read N- to C-terminus: uncharacterized protein (259 aa).

It belongs to the BtpA family.

This is an uncharacterized protein from Pyrococcus abyssi (strain GE5 / Orsay).